Here is a 33-residue protein sequence, read N- to C-terminus: Photosystem II reaction center protein Psb30 (33 aa).

Residues 5 to 25 (VIAQPIVLGLIVASGPLVIVS) traverse the membrane as a helical segment.

The protein belongs to the Psb30/Ycf12 family. In terms of assembly, PSII is composed of 1 copy each of membrane proteins PsbA, PsbB, PsbC, PsbD, PsbE, PsbF, PsbH, PsbI, PsbJ, PsbK, PsbL, PsbM, PsbT, PsbX, PsbY, PsbZ, Psb30/Ycf12, peripheral proteins of the oxygen-evolving complex and a large number of cofactors. It forms dimeric complexes.

The protein localises to the plastid membrane. In terms of biological role, a core subunit of photosystem II (PSII), probably helps stabilize the reaction center. This is Photosystem II reaction center protein Psb30 from Aneura mirabilis (Parasitic liverwort).